Here is a 287-residue protein sequence, read N- to C-terminus: Troponin T, cardiac muscle (287 aa).

Acidic residues-rich tracts occupy residues 1–31 (MSDV…EEAG) and 44–59 (EDGE…DGPV). 2 disordered regions span residues 1-85 (MSDV…GERV) and 124-208 (KDRI…EKKK). Ser-2 is modified (N-acetylserine). At Ser-2 the chain carries Phosphoserine; by CK2. Residues 66 to 79 (APGPFMPNLVPPKI) show a composition bias toward pro residues. 2 stretches are compositionally biased toward basic and acidic residues: residues 124 to 173 (KDRI…DEAR) and 192 to 208 (QAER…EKKK). Ser-197 bears the Phosphoserine; by PKC/PRKCA mark. Thr-202 carries the post-translational modification Phosphothreonine; by PKC/PRKCA and RAF1. Residue Thr-283 is modified to Phosphothreonine; by PKC/PRKCA.

It belongs to the troponin T family. Phosphorylation at Thr-202 by PRKCA induces significant reduction in myofilament calcium sensitivity and actomyosin ATPase activity.

In terms of biological role, troponin T is the tropomyosin-binding subunit of troponin, the thin filament regulatory complex which confers calcium-sensitivity to striated muscle actomyosin ATPase activity. The polypeptide is Troponin T, cardiac muscle (TNNT2) (Ovis aries (Sheep)).